The primary structure comprises 482 residues: BTB/POZ domain-containing protein 6-B (482 aa).

A BTB domain is found at 80 to 150 (ADVHFVVGPP…MYSDEIELEA (71 aa)).

As to quaternary structure, interacts with cul3. Interacts (via BTB domain) with zbtb16/plzf. In terms of tissue distribution, in embryos, expressed in the cranial ganglia.

It is found in the cytoplasm. It localises to the nucleus. Functionally, adapter protein for the cul3 E3 ubiquitin-protein ligase complex. Promotes the export of zbtb16/plzf from the nucleus to the cytoplasm and targets zbtb16/plzf for ubiquitination and degradation. Up-regulates neurog1 expression and antagonizes zbtb16/plzf, to promote neurogenesis. The protein is BTB/POZ domain-containing protein 6-B (btbd6b) of Danio rerio (Zebrafish).